Reading from the N-terminus, the 251-residue chain is tRNA (guanine-N(7)-)-methyltransferase (251 aa).

Residues Gly-71, 94 to 95 (EL), 128 to 129 (NS), and Leu-148 contribute to the S-adenosyl-L-methionine site. The active site involves Asp-151. An S-adenosyl-L-methionine-binding site is contributed by 226-228 (TEE).

This sequence belongs to the class I-like SAM-binding methyltransferase superfamily. TrmB family.

Its subcellular location is the nucleus. It catalyses the reaction guanosine(46) in tRNA + S-adenosyl-L-methionine = N(7)-methylguanosine(46) in tRNA + S-adenosyl-L-homocysteine. The protein operates within tRNA modification; N(7)-methylguanine-tRNA biosynthesis. Catalyzes the formation of N(7)-methylguanine at position 46 (m7G46) in tRNA. This Arabidopsis thaliana (Mouse-ear cress) protein is tRNA (guanine-N(7)-)-methyltransferase.